Reading from the N-terminus, the 95-residue chain is Large ribosomal subunit protein bL25 (95 aa).

Belongs to the bacterial ribosomal protein bL25 family. In terms of assembly, part of the 50S ribosomal subunit; part of the 5S rRNA/L5/L18/L25 subcomplex. Contacts the 5S rRNA. Binds to the 5S rRNA independently of L5 and L18.

This is one of the proteins that binds to the 5S RNA in the ribosome where it forms part of the central protuberance. The chain is Large ribosomal subunit protein bL25 from Shewanella amazonensis (strain ATCC BAA-1098 / SB2B).